The primary structure comprises 482 residues: Putative fatty acid desaturase 2-like protein FADS2B (482 aa).

Residues 1-31 (MKFEEKCGDNGSIVGRNQSYPGEKHQPKGKP) are disordered. At 1 to 167 (MKFEEKCGDN…EAMNMFHANL (167 aa)) the chain is on the cytoplasmic side. The Cytochrome b5 heme-binding domain maps to 56 to 132 (LSMYTWLEIQ…LKPLLIGELA (77 aa)). The heme site is built by H90 and H113. A helical membrane pass occupies residues 168 to 188 (GFFFLHFVQILILEVLAWLIV). Over 189 to 190 (YH) the chain is Lumenal. The helical transmembrane segment at 191–211 (FGSGWPVTMFISFLLTISQAS) threads the bilayer. The Cytoplasmic segment spans residues 212-305 (SSFLQHDAGH…YEEQHLYFYK (94 aa)). The Histidine box-1 signature appears at 217–221 (HDAGH). A Histidine box-2 motif is present at residues 254-258 (HFEQH). The helical transmembrane segment at 306-326 (VWLPLFMPVYLKLPSMQAMYL) threads the bilayer. Over 327 to 343 (QRYWVCFSLQDITWVSS) the chain is Lumenal. Residues 344–364 (FYIYFITFGLYYGIFGTMLLI) traverse the membrane as a helical segment. Residues 365 to 482 (YLVKFLESPW…AALWADAYYE (118 aa)) lie on the Cytoplasmic side of the membrane. A Histidine box-3 motif is present at residues 421–425 (QIEHH).

This sequence belongs to the fatty acid desaturase type 1 family.

The protein resides in the endoplasmic reticulum membrane. It participates in lipid metabolism; polyunsaturated fatty acid biosynthesis. In Homo sapiens (Human), this protein is Putative fatty acid desaturase 2-like protein FADS2B.